A 508-amino-acid chain; its full sequence is Photosystem II CP47 reaction center protein (508 aa).

6 helical membrane passes run 21–36 (AVHI…WAGS), 101–115 (IVFS…TWHW), 140–156 (GIHL…FGAF), 203–218 (VAAG…FHLS), 237–252 (VLSS…AFIV), and 457–472 (TFAL…HGAR).

The protein belongs to the PsbB/PsbC family. PsbB subfamily. In terms of assembly, PSII is composed of 1 copy each of membrane proteins PsbA, PsbB, PsbC, PsbD, PsbE, PsbF, PsbH, PsbI, PsbJ, PsbK, PsbL, PsbM, PsbT, PsbX, PsbY, PsbZ, Psb30/Ycf12, at least 3 peripheral proteins of the oxygen-evolving complex and a large number of cofactors. It forms dimeric complexes. It depends on Binds multiple chlorophylls. PSII binds additional chlorophylls, carotenoids and specific lipids. as a cofactor.

Its subcellular location is the plastid. It localises to the chloroplast thylakoid membrane. Functionally, one of the components of the core complex of photosystem II (PSII). It binds chlorophyll and helps catalyze the primary light-induced photochemical processes of PSII. PSII is a light-driven water:plastoquinone oxidoreductase, using light energy to abstract electrons from H(2)O, generating O(2) and a proton gradient subsequently used for ATP formation. The sequence is that of Photosystem II CP47 reaction center protein from Welwitschia mirabilis (Tree tumbo).